The chain runs to 181 residues: Adenylate kinase (181 aa).

10–15 (GAGKGT) is an ATP binding site. The tract at residues 30-59 (STGDLFRKNIGDGTPLGLEAKRYLDAGDLV) is NMP. AMP contacts are provided by residues Thr31, Arg36, 57–59 (DLV), 85–88 (GYPR), and Gln92. The LID stretch occupies residues 126 to 132 (GRGRADD). Arg127 is a binding site for ATP. AMP contacts are provided by Arg129 and Arg140. Gly166 lines the ATP pocket.

It belongs to the adenylate kinase family. As to quaternary structure, monomer.

Its subcellular location is the cytoplasm. It carries out the reaction AMP + ATP = 2 ADP. It participates in purine metabolism; AMP biosynthesis via salvage pathway; AMP from ADP: step 1/1. Its function is as follows. Catalyzes the reversible transfer of the terminal phosphate group between ATP and AMP. Plays an important role in cellular energy homeostasis and in adenine nucleotide metabolism. In Mycolicibacterium smegmatis (strain ATCC 700084 / mc(2)155) (Mycobacterium smegmatis), this protein is Adenylate kinase.